A 468-amino-acid polypeptide reads, in one-letter code: Argininosuccinate synthase (468 aa).

ATP contacts are provided by residues alanine 10 to serine 18 and alanine 37. L-citrulline contacts are provided by tyrosine 90 and serine 95. Glycine 120 is a binding site for ATP. L-aspartate is bound by residues threonine 122, asparagine 126, and aspartate 127. Residue asparagine 126 coordinates L-citrulline. Positions 130, 182, 191, 267, and 279 each coordinate L-citrulline. Low complexity predominate over residues proline 445 to alanine 457. Residues proline 445–glycine 468 are disordered. Positions proline 458–glycine 468 are enriched in basic residues.

Belongs to the argininosuccinate synthase family. Type 1 subfamily. As to quaternary structure, homotetramer.

It localises to the cytoplasm. The catalysed reaction is L-citrulline + L-aspartate + ATP = 2-(N(omega)-L-arginino)succinate + AMP + diphosphate + H(+). It functions in the pathway amino-acid biosynthesis; L-arginine biosynthesis; L-arginine from L-ornithine and carbamoyl phosphate: step 2/3. The sequence is that of Argininosuccinate synthase from Dechloromonas aromatica (strain RCB).